Reading from the N-terminus, the 230-residue chain is MGEEGFLAHFAFSIGGLPITQSVLTTWFIMISLFIMAWSTTYKCSLLQPSTYQLIWEGVLSTMYDAIKEVLPDHVELIFPFVATLWIFILVSNLIGVIPGFYSPTADLSVTASLAIMTFLSVHWFGIRAEGWREYLKHYIKPTPFLLPFHLISEISRTLALAVRLFGNIMSLQLTALIVLMIAGFLVPIPILILHIIEAIIQAYIFGMLALIYIAGGIQAHELKSQGESL.

5 consecutive transmembrane segments (helical) span residues Leu17 to Ala37, Ile78 to Ile98, Asp107 to Ile127, Leu165 to Val187, and Glu198 to Ile218.

This sequence belongs to the ATPase A chain family. In terms of assembly, F-type ATPases have 2 components, CF(1) - the catalytic core - and CF(0) - the membrane proton channel. CF(1) has five subunits: alpha(3), beta(3), gamma(1), delta(1), epsilon(1). CF(0) has three main subunits: a(1), b(2) and c(9-12). The alpha and beta chains form an alternating ring which encloses part of the gamma chain. CF(1) is attached to CF(0) by a central stalk formed by the gamma and epsilon chains, while a peripheral stalk is formed by the delta and b chains.

Its subcellular location is the cell inner membrane. Functionally, key component of the proton channel; it plays a direct role in the translocation of protons across the membrane. The chain is ATP synthase subunit a from Legionella pneumophila (strain Paris).